The sequence spans 214 residues: ATP-dependent dethiobiotin synthetase BioD (214 aa).

10 to 15 (GIGKTY) provides a ligand contact to ATP. Residue Thr14 coordinates Mg(2+). Residue Lys35 is part of the active site. Position 39 (Thr39) interacts with substrate. ATP-binding positions include Asp44, 109-112 (EGAG), and 169-170 (NC). Residues Asp44 and Glu109 each coordinate Mg(2+).

This sequence belongs to the dethiobiotin synthetase family. As to quaternary structure, homodimer. The cofactor is Mg(2+).

It localises to the cytoplasm. It carries out the reaction (7R,8S)-7,8-diammoniononanoate + CO2 + ATP = (4R,5S)-dethiobiotin + ADP + phosphate + 3 H(+). It participates in cofactor biosynthesis; biotin biosynthesis; biotin from 7,8-diaminononanoate: step 1/2. In terms of biological role, catalyzes a mechanistically unusual reaction, the ATP-dependent insertion of CO2 between the N7 and N8 nitrogen atoms of 7,8-diaminopelargonic acid (DAPA, also called 7,8-diammoniononanoate) to form a ureido ring. The protein is ATP-dependent dethiobiotin synthetase BioD of Methanocaldococcus jannaschii (strain ATCC 43067 / DSM 2661 / JAL-1 / JCM 10045 / NBRC 100440) (Methanococcus jannaschii).